Here is a 410-residue protein sequence, read N- to C-terminus: 2-oxoisovalerate dehydrogenase subunit alpha (410 aa).

This sequence belongs to the BCKDHA family. As to quaternary structure, heterodimer of an alpha and a beta chain. It depends on thiamine diphosphate as a cofactor.

It carries out the reaction N(6)-[(R)-lipoyl]-L-lysyl-[protein] + 3-methyl-2-oxobutanoate + H(+) = N(6)-[(R)-S(8)-2-methylpropanoyldihydrolipoyl]-L-lysyl-[protein] + CO2. Functionally, the branched-chain alpha-keto dehydrogenase complex catalyzes the overall conversion of alpha-keto acids to acyl-CoA and CO(2). It contains multiple copies of three enzymatic components: branched-chain alpha-keto acid decarboxylase (E1), lipoamide acyltransferase (E2) and lipoamide dehydrogenase (E3). The protein is 2-oxoisovalerate dehydrogenase subunit alpha (bkdA1) of Pseudomonas aeruginosa (strain ATCC 15692 / DSM 22644 / CIP 104116 / JCM 14847 / LMG 12228 / 1C / PRS 101 / PAO1).